The chain runs to 101 residues: Small ribosomal subunit protein uS14 (101 aa).

Residues 1 to 10 are compositionally biased toward basic and acidic residues; that stretch reads MAKKSSIEKN. The tract at residues 1-23 is disordered; sequence MAKKSSIEKNNRRKRMVKNAAPK.

This sequence belongs to the universal ribosomal protein uS14 family. Part of the 30S ribosomal subunit. Contacts proteins S3 and S10.

Binds 16S rRNA, required for the assembly of 30S particles and may also be responsible for determining the conformation of the 16S rRNA at the A site. This Bradyrhizobium diazoefficiens (strain JCM 10833 / BCRC 13528 / IAM 13628 / NBRC 14792 / USDA 110) protein is Small ribosomal subunit protein uS14.